The following is a 354-amino-acid chain: MTEATQAQPAVPRLTSLSHGGGCGCKIAPGVLSELLKRATPPALFPDLLVGTETSDDAAVYRLNDEQAIVATTDFFMPIVDDPFDFGRIAATNALSDVYAMGGKPILALALVGMPINVLPHETIAAVLRGGESVCADAGIPVAGGHSIDSVEPIYGLAAIGVVHPSRVKRNAAARAGDVLVLGKPLGVGVLSAALKKNQLDADGYAQMVATTTKLNRPGAELAALPGVHALTDVTGFGLLGHTLELARGAQLTARVHYASLPWLAGVETFVADGVFTGASGRNWAAYGTDIRLADGLPPVAQALLTDPQTSGGLLVACVPEAVDDVLACFRADGFDRAAVIGEMADGPARVDVA.

Residue cysteine 23 is part of the active site. ATP contacts are provided by residues lysine 26 and 54–56 (TSD). Residue aspartate 57 coordinates Mg(2+). ATP contacts are provided by residues aspartate 74, aspartate 97, and 145–147 (GHS). Position 97 (aspartate 97) interacts with Mg(2+). Aspartate 233 provides a ligand contact to Mg(2+).

The protein belongs to the selenophosphate synthase 1 family. Class I subfamily. As to quaternary structure, homodimer. The cofactor is Mg(2+).

The catalysed reaction is hydrogenselenide + ATP + H2O = selenophosphate + AMP + phosphate + 2 H(+). In terms of biological role, synthesizes selenophosphate from selenide and ATP. In Burkholderia cenocepacia (strain ATCC BAA-245 / DSM 16553 / LMG 16656 / NCTC 13227 / J2315 / CF5610) (Burkholderia cepacia (strain J2315)), this protein is Selenide, water dikinase.